A 407-amino-acid polypeptide reads, in one-letter code: uncharacterized protein (407 aa).

Residues 10–37 (DKLEQLANDVVTELTDMENKYKDLHVEL) are a coiled coil.

This is an uncharacterized protein from Bacillus subtilis (strain 168).